The chain runs to 111 residues: Secreted transmembrane peptide 5 (111 aa).

Positions 1-46 (MRLSVFYIFITRLAMTKNATKNEMGSKSPNIVALVLPLLLILYTLS) are cleaved as a signal peptide. Positions 66-79 (IVWTPHSNSCGGSP) match the SCOOP motif motif. A SxS motif essential for MIK2 binding motif is present at residues 72 to 74 (SNS). A disordered region spans residues 89–111 (TTGRPCRRSRPPGTNIPVSDQSP).

The protein belongs to the serine rich endogenous peptide (SCOOP) phytocytokine family. In terms of assembly, interacts with MIK2 (via extracellular leucine-rich repeat domain); this interaction triggers the formation of complex between MIK2 and the BAK1/SERK3 and SERK4 coreceptors, and subsequent BAK1 activation by phosphorylation. As to expression, mostly expressed in leaves, and, to a lower extent, in roots, stems, siliques, seeds and flowers.

It is found in the cell membrane. It localises to the secreted. The protein resides in the extracellular space. Its subcellular location is the apoplast. In terms of biological role, brassicaceae-specific phytocytokine (plant endogenous peptide released into the apoplast) perceived by MIK2 in a BAK1/SERK3 and SERK4 coreceptors-dependent manner, that modulates various physiological and antimicrobial processes including growth prevention and reactive oxygen species (ROS) response regulation. The chain is Secreted transmembrane peptide 5 from Arabidopsis thaliana (Mouse-ear cress).